Reading from the N-terminus, the 166-residue chain is Large ribosomal subunit protein uL11x (166 aa).

Belongs to the universal ribosomal protein uL11 family.

Its function is as follows. Binds directly to 26S ribosomal RNA. The chain is Large ribosomal subunit protein uL11x (RPL12C) from Arabidopsis thaliana (Mouse-ear cress).